We begin with the raw amino-acid sequence, 180 residues long: RNA polymerase sigma-E factor (180 aa).

The Polymerase core binding motif lies at 36–49 (DLLQTALARTYGRW). Residues 130–149 (TEETAAALGMSAGTVKSTLH) constitute a DNA-binding region (H-T-H motif).

The protein belongs to the sigma-70 factor family. ECF subfamily.

The protein resides in the cytoplasm. In terms of biological role, sigma factors are initiation factors that promote the attachment of RNA polymerase to specific initiation sites and are then released. This sigma factor is required for the synthesis of the antibiotic actinomycin. The protein is RNA polymerase sigma-E factor (sigE) of Streptomyces antibioticus.